The chain runs to 110 residues: Hydrogenase maturation factor HypA (110 aa).

His2 contacts Ni(2+). The Zn(2+) site is built by Cys70, Cys73, Cys86, and Cys89.

This sequence belongs to the HypA/HybF family.

Involved in the maturation of [NiFe] hydrogenases. Required for nickel insertion into the metal center of the hydrogenase. The sequence is that of Hydrogenase maturation factor HypA from Geobacter sp. (strain M21).